The following is a 37-amino-acid chain: Cytochrome b6-f complex subunit 5 (37 aa).

Residues 5–25 (LLSGIVLGLVPITLAGLFVTA) form a helical membrane-spanning segment.

This sequence belongs to the PetG family. The 4 large subunits of the cytochrome b6-f complex are cytochrome b6, subunit IV (17 kDa polypeptide, PetD), cytochrome f and the Rieske protein, while the 4 small subunits are PetG, PetL, PetM and PetN. The complex functions as a dimer.

The protein localises to the plastid. The protein resides in the chloroplast thylakoid membrane. In terms of biological role, component of the cytochrome b6-f complex, which mediates electron transfer between photosystem II (PSII) and photosystem I (PSI), cyclic electron flow around PSI, and state transitions. PetG is required for either the stability or assembly of the cytochrome b6-f complex. The protein is Cytochrome b6-f complex subunit 5 of Gnetum parvifolium (Small-leaved jointfir).